The following is a 354-amino-acid chain: Serum paraoxonase/lactonase 3 (354 aa).

N-linked (GlcNAc...) asparagine glycosylation is present at N29. A disulfide bond links C42 and C352. The Ca(2+) site is built by E53 and D54. Residue H114 is the Proton acceptor of the active site. Residue I116 participates in Ca(2+) binding. S165 carries the post-translational modification Phosphoserine. 5 residues coordinate Ca(2+): N167, D168, N223, D268, and N269. N269 and N323 each carry an N-linked (GlcNAc...) asparagine glycan.

Belongs to the paraoxonase family. As to quaternary structure, homodimer. Ca(2+) is required as a cofactor. Post-translationally, the signal sequence is not cleaved.

The protein resides in the secreted. It localises to the extracellular space. The catalysed reaction is a phenyl acetate + H2O = a phenol + acetate + H(+). The enzyme catalyses An aryl dialkyl phosphate + H2O = dialkyl phosphate + an aryl alcohol.. It carries out the reaction an N-acyl-L-homoserine lactone + H2O = an N-acyl-L-homoserine + H(+). Its function is as follows. Has low activity towards the organophosphate paraxon and aromatic carboxylic acid esters. Rapidly hydrolyzes lactones such as statin prodrugs (e.g. lovastatin). Hydrolyzes aromatic lactones and 5- or 6-member ring lactones with aliphatic substituents but not simple lactones or those with polar substituents. This chain is Serum paraoxonase/lactonase 3 (PON3), found in Homo sapiens (Human).